Reading from the N-terminus, the 633-residue chain is Chaperone protein HtpG (633 aa).

Residues 1-344 (MSLQPQAETL…SNDLPLNISR (344 aa)) form an a; substrate-binding region. A b region spans residues 345-560 (ELLQSNEVIN…ENEMSGHLQR (216 aa)). Positions 561–633 (LLIQTGQDFM…KGLNELLLDS (73 aa)) are c.

Belongs to the heat shock protein 90 family. Homodimer.

It is found in the cytoplasm. Its function is as follows. Molecular chaperone. Has ATPase activity. The sequence is that of Chaperone protein HtpG from Coxiella burnetii (strain RSA 331 / Henzerling II).